Reading from the N-terminus, the 348-residue chain is tRNA N6-adenosine threonylcarbamoyltransferase (348 aa).

Residues H116 and H120 each contribute to the Fe cation site. Residues 138 to 142 (IISGG), D171, G184, and N282 contribute to the substrate site. Residue D310 participates in Fe cation binding.

It belongs to the KAE1 / TsaD family. Requires Fe(2+) as cofactor.

The protein localises to the cytoplasm. It carries out the reaction L-threonylcarbamoyladenylate + adenosine(37) in tRNA = N(6)-L-threonylcarbamoyladenosine(37) in tRNA + AMP + H(+). Functionally, required for the formation of a threonylcarbamoyl group on adenosine at position 37 (t(6)A37) in tRNAs that read codons beginning with adenine. Is involved in the transfer of the threonylcarbamoyl moiety of threonylcarbamoyl-AMP (TC-AMP) to the N6 group of A37, together with TsaE and TsaB. TsaD likely plays a direct catalytic role in this reaction. The chain is tRNA N6-adenosine threonylcarbamoyltransferase from Ehrlichia ruminantium (strain Welgevonden).